A 476-amino-acid polypeptide reads, in one-letter code: Eukaryotic translation initiation factor 3 subunit L (476 aa).

In terms of domain architecture, PCI spans 257 to 452; that stretch reads DAIRMFSHIL…DLDYALENDL (196 aa).

It belongs to the eIF-3 subunit L family. In terms of assembly, component of the eukaryotic translation initiation factor 3 (eIF-3) complex.

It localises to the cytoplasm. Its function is as follows. Component of the eukaryotic translation initiation factor 3 (eIF-3) complex, which is involved in protein synthesis of a specialized repertoire of mRNAs and, together with other initiation factors, stimulates binding of mRNA and methionyl-tRNAi to the 40S ribosome. The eIF-3 complex specifically targets and initiates translation of a subset of mRNAs involved in cell proliferation. In Aspergillus oryzae (strain ATCC 42149 / RIB 40) (Yellow koji mold), this protein is Eukaryotic translation initiation factor 3 subunit L.